We begin with the raw amino-acid sequence, 173 residues long: Co-chaperone protein HscB homolog (173 aa).

The region spanning 5–77 (CHFAQFDLQP…PRRALYLLTL (73 aa)) is the J domain.

This sequence belongs to the HscB family. In terms of assembly, interacts with HscA and stimulates its ATPase activity.

Co-chaperone involved in the maturation of iron-sulfur cluster-containing proteins. Seems to help targeting proteins to be folded toward HscA. The chain is Co-chaperone protein HscB homolog from Pseudomonas aeruginosa (strain UCBPP-PA14).